The sequence spans 471 residues: Microtubule-associated tyrosine carboxypeptidase 1 (471 aa).

2 disordered regions span residues 1–40 (MVLD…PLYP) and 76–116 (HMRR…LRPA). His280 is a binding site for Zn(2+). Glu281 functions as the Nucleophile in the catalytic mechanism. Zn(2+)-binding residues include His285 and Glu316.

Belongs to the peptidase MATCAP family. Requires Zn(2+) as cofactor.

The protein localises to the cytoplasm. It localises to the cytoskeleton. The enzyme catalyses C-terminal L-alpha-aminoacyl-L-glutamyl-L-glutamyl-L-tyrosyl-[tubulin] + H2O = C-terminal L-alpha-aminoacyl-L-glutamyl-L-glutamyl-[tubulin] + L-tyrosine. The catalysed reaction is C-terminal L-alpha-aminoacyl-L-glutamyl-L-glutamyl-L-phenylalanyl-[tubulin] + H2O = C-terminal L-alpha-aminoacyl-L-glutamyl-L-glutamyl-[tubulin] + L-phenylalanine. Its function is as follows. Tyrosine carboxypeptidase that removes the C-terminal tyrosine residue of alpha-tubulin, thereby regulating microtubule dynamics and function. Also able to remove the C-terminal phenylalanine residue of alpha-tubulin TUBA8. Recognizes adjacent tubulin dimers along the same protofilament. This is Microtubule-associated tyrosine carboxypeptidase 1 from Homo sapiens (Human).